Consider the following 253-residue polypeptide: MVSSSTTVPRSGVYYFSQGWKLVTLPGIRRFVILPLLVNIVLMGGAFWWLFTQLDAWIPSLMSHVPDWLQWLSYLLWPIAVISVLLVFGYFFSTLANWIAAPFNGLLAEQLEARLTGATPPDTGILGIMKDVPRIMKREWQKLAWYLPRAIVLLVLYFIPGIGQTIAPVLWFLFSAWMLAIQYCDYPFDNHKVPFKTMRAALRTQKVANMQFGALTSLFTMIPVLNLFIMPVAVCGATAMWVDCWRAKHALWK.

Transmembrane regions (helical) follow at residues 31-51, 72-92, 151-171, and 222-242; these read FVIL…WWLF, LSYL…GYFF, IVLL…PVLW, and IPVL…AMWV.

This sequence belongs to the CysZ family.

The protein localises to the cell inner membrane. In terms of biological role, high affinity, high specificity proton-dependent sulfate transporter, which mediates sulfate uptake. Provides the sulfur source for the cysteine synthesis pathway. The polypeptide is Sulfate transporter CysZ (Salmonella paratyphi A (strain AKU_12601)).